Here is a 242-residue protein sequence, read N- to C-terminus: UPF0309 protein BMEA_B0892 (242 aa).

The SIS domain maps to 30–214; sequence AADLIAAAAR…ARLVGEGDAP (185 aa).

The protein belongs to the UPF0309 family.

This is UPF0309 protein BMEA_B0892 from Brucella melitensis biotype 2 (strain ATCC 23457).